We begin with the raw amino-acid sequence, 364 residues long: tRNA 2-selenouridine synthase (364 aa).

A Rhodanese domain is found at 14 to 137; sequence LIADTPIIDV…LRQTAIQATI (124 aa). Catalysis depends on Cys97, which acts as the S-selanylcysteine intermediate.

This sequence belongs to the SelU family. In terms of assembly, monomer.

It carries out the reaction 5-methylaminomethyl-2-thiouridine(34) in tRNA + selenophosphate + (2E)-geranyl diphosphate + H2O + H(+) = 5-methylaminomethyl-2-selenouridine(34) in tRNA + (2E)-thiogeraniol + phosphate + diphosphate. It catalyses the reaction 5-methylaminomethyl-2-thiouridine(34) in tRNA + (2E)-geranyl diphosphate = 5-methylaminomethyl-S-(2E)-geranyl-thiouridine(34) in tRNA + diphosphate. The enzyme catalyses 5-methylaminomethyl-S-(2E)-geranyl-thiouridine(34) in tRNA + selenophosphate + H(+) = 5-methylaminomethyl-2-(Se-phospho)selenouridine(34) in tRNA + (2E)-thiogeraniol. The catalysed reaction is 5-methylaminomethyl-2-(Se-phospho)selenouridine(34) in tRNA + H2O = 5-methylaminomethyl-2-selenouridine(34) in tRNA + phosphate. Involved in the post-transcriptional modification of the uridine at the wobble position (U34) of tRNA(Lys), tRNA(Glu) and tRNA(Gln). Catalyzes the conversion of 2-thiouridine (S2U-RNA) to 2-selenouridine (Se2U-RNA). Acts in a two-step process involving geranylation of 2-thiouridine (S2U) to S-geranyl-2-thiouridine (geS2U) and subsequent selenation of the latter derivative to 2-selenouridine (Se2U) in the tRNA chain. This Escherichia coli O157:H7 protein is tRNA 2-selenouridine synthase.